The following is a 139-amino-acid chain: 6,7-dimethyl-8-ribityllumazine synthase (139 aa).

5-amino-6-(D-ribitylamino)uracil is bound by residues F13, 45–47, and 69–71; these read VFD and AVI. 74 to 75 contacts (2S)-2-hydroxy-3-oxobutyl phosphate; it reads AT. H77 functions as the Proton donor in the catalytic mechanism. L102 provides a ligand contact to 5-amino-6-(D-ribitylamino)uracil. R117 lines the (2S)-2-hydroxy-3-oxobutyl phosphate pocket.

The protein belongs to the DMRL synthase family.

It carries out the reaction (2S)-2-hydroxy-3-oxobutyl phosphate + 5-amino-6-(D-ribitylamino)uracil = 6,7-dimethyl-8-(1-D-ribityl)lumazine + phosphate + 2 H2O + H(+). It functions in the pathway cofactor biosynthesis; riboflavin biosynthesis; riboflavin from 2-hydroxy-3-oxobutyl phosphate and 5-amino-6-(D-ribitylamino)uracil: step 1/2. In terms of biological role, catalyzes the formation of 6,7-dimethyl-8-ribityllumazine by condensation of 5-amino-6-(D-ribitylamino)uracil with 3,4-dihydroxy-2-butanone 4-phosphate. This is the penultimate step in the biosynthesis of riboflavin. The sequence is that of 6,7-dimethyl-8-ribityllumazine synthase from Methanothermobacter thermautotrophicus (strain ATCC 29096 / DSM 1053 / JCM 10044 / NBRC 100330 / Delta H) (Methanobacterium thermoautotrophicum).